Here is a 31-residue protein sequence, read N- to C-terminus: Photosystem II reaction center protein M (31 aa).

The chain crosses the membrane as a helical span at residues 5-25; it reads ILAFIATALLILVPTAFLLII.

The protein belongs to the PsbM family. In terms of assembly, PSII is composed of 1 copy each of membrane proteins PsbA, PsbB, PsbC, PsbD, PsbE, PsbF, PsbH, PsbI, PsbJ, PsbK, PsbL, PsbM, PsbT, PsbX, PsbY, PsbZ, Psb30/Ycf12, at least 3 peripheral proteins of the oxygen-evolving complex and a large number of cofactors. It forms dimeric complexes.

The protein localises to the plastid membrane. One of the components of the core complex of photosystem II (PSII). PSII is a light-driven water:plastoquinone oxidoreductase that uses light energy to abstract electrons from H(2)O, generating O(2) and a proton gradient subsequently used for ATP formation. It consists of a core antenna complex that captures photons, and an electron transfer chain that converts photonic excitation into a charge separation. This subunit is found at the monomer-monomer interface. The protein is Photosystem II reaction center protein M of Cuscuta reflexa (Southern Asian dodder).